The primary structure comprises 92 residues: MLNINSDAKLKDLLEFPCSFTYKVMGHAKPELPERVLEVIQRHAPGDYSPRVKPSAKGNYHSVSVTIHATSIEQVEILYKELGEIDIVRMVL.

It belongs to the UPF0250 family.

The protein is UPF0250 protein VC0395_A0469/VC395_0960 of Vibrio cholerae serotype O1 (strain ATCC 39541 / Classical Ogawa 395 / O395).